The following is a 116-amino-acid chain: Dynein light chain Tctex-type 3 (116 aa).

3'-nitrotyrosine is present on Tyr4.

Belongs to the dynein light chain Tctex-type family. Homodimer. The cytoplasmic dynein 1 complex consists of two catalytic heavy chains (HCs) and a number of non-catalytic subunits presented by intermediate chains (ICs), light intermediate chains (LICs) and light chains (LCs); the composition seems to vary in respect to the IC, LIC and LC composition. The heavy chain homodimer serves as a scaffold for the probable homodimeric assembly of the respective non-catalytic subunits. The ICs and LICs bind directly to the HC dimer and the LCs assemble on the IC dimer. DYNLT1 and DYNLT3 compete for association with dynein IC (DYNC1I1 or DYNC1I2). Self-associates. Interacts with DYNC1I1 and DYNC1I2. Interacts with BUB3. Interacts with SATB1 in nucleus to form complex with matrix attachment regions (MARs) of DNA.

It localises to the nucleus. It is found in the cytoplasm. The protein resides in the cytoskeleton. The protein localises to the chromosome. Its subcellular location is the centromere. It localises to the kinetochore. Functionally, acts as one of several non-catalytic accessory components of the cytoplasmic dynein 1 complex that are thought to be involved in linking dynein to cargos and to adapter proteins that regulate dynein function. Cytoplasmic dynein 1 acts as a motor for the intracellular retrograde motility of vesicles and organelles along microtubules. Probably binds BUB3 as part of transport cargo. Required for the efficient progression through mitosis. This is Dynein light chain Tctex-type 3 (Dynlt3) from Mus musculus (Mouse).